Reading from the N-terminus, the 372-residue chain is tRNA-specific 2-thiouridylase MnmA 1 (372 aa).

Residues 26–33 and Met-52 contribute to the ATP site; that span reads AISGGVDS. Cys-118 (nucleophile) is an active-site residue. An intrachain disulfide couples Cys-118 to Cys-214. ATP is bound at residue Gly-142. The segment at 164 to 166 is interaction with tRNA; it reads KDQ. Cys-214 serves as the catalytic Cysteine persulfide intermediate.

The protein belongs to the MnmA/TRMU family.

The protein resides in the cytoplasm. The enzyme catalyses S-sulfanyl-L-cysteinyl-[protein] + uridine(34) in tRNA + AH2 + ATP = 2-thiouridine(34) in tRNA + L-cysteinyl-[protein] + A + AMP + diphosphate + H(+). Its function is as follows. Catalyzes the 2-thiolation of uridine at the wobble position (U34) of tRNA, leading to the formation of s(2)U34. The polypeptide is tRNA-specific 2-thiouridylase MnmA 1 (Syntrophus aciditrophicus (strain SB)).